The sequence spans 223 residues: Serum amyloid P-component (223 aa).

The signal sequence occupies residues M1–A19. The 200-residue stretch at S24–V223 folds into the Pentraxin (PTX) domain. N51 is a glycosylation site (N-linked (GlcNAc...) asparagine). C55 and C114 are oxidised to a cystine. D77, N78, E155, Q156, D157, and Q167 together coordinate Ca(2+).

Belongs to the pentraxin family. In terms of assembly, homopentamer. Pentraxin (or pentaxin) have a discoid arrangement of 5 non-covalently bound subunits. Requires Ca(2+) as cofactor. N-glycosylated with a complex biantennary oligosaccharide chain with a sialic acid at the end (disialo-SAP). Monosialo-SAP as well as asioalo-SAP are also detected. As to expression, found in serum and urine.

The protein resides in the secreted. Its function is as follows. Can interact with DNA and histones and may scavenge nuclear material released from damaged circulating cells. May also function as a calcium-dependent lectin. The sequence is that of Serum amyloid P-component (APCS) from Homo sapiens (Human).